Here is a 754-residue protein sequence, read N- to C-terminus: Polyribonucleotide nucleotidyltransferase (754 aa).

2 residues coordinate Mg(2+): Asp-525 and Asp-531. The KH domain maps to 591-650 (PRITTIKVPVDKIGEVIGPKGKMINSITEETGASISIEDDGTVFVGASNGEAAQAAIDKI). An S1 motif domain is found at 662–731 (GERFLGTVVK…NRGKISLVLV (70 aa)).

Belongs to the polyribonucleotide nucleotidyltransferase family. The cofactor is Mg(2+).

The protein localises to the cytoplasm. The enzyme catalyses RNA(n+1) + phosphate = RNA(n) + a ribonucleoside 5'-diphosphate. In terms of biological role, involved in mRNA degradation. Catalyzes the phosphorolysis of single-stranded polyribonucleotides processively in the 3'- to 5'-direction. The chain is Polyribonucleotide nucleotidyltransferase from Mycolicibacterium vanbaalenii (strain DSM 7251 / JCM 13017 / BCRC 16820 / KCTC 9966 / NRRL B-24157 / PYR-1) (Mycobacterium vanbaalenii).